Reading from the N-terminus, the 248-residue chain is Homeobox protein Hox-A4 (248 aa).

The disordered stretch occupies residues 23-107; the sequence is YQQSGYIPNP…PDGGAGANAS (85 aa). A compositionally biased stretch (basic and acidic residues) spans 35–51; sequence YYERPKDTGFPHHDEPS. The Antp-type hexapeptide motif lies at 128-133; sequence VYPWMK. The homeobox DNA-binding region spans 149–208; sequence PKRSRTAYTRQQALELEKEFHFNRYLTRRRRVEIAHTMCLSERQVKIWFQNRRMKWKKEH. The disordered stretch occupies residues 207 to 248; it reads EHKLPNTKIRSSSSASSSASGAQQQQIKTGQQLVPTPCTAGL. Over residues 217 to 238 the composition is skewed to low complexity; sequence SSSSASSSASGAQQQQIKTGQQ.

The protein belongs to the Antp homeobox family. Deformed subfamily.

The protein resides in the nucleus. In terms of biological role, sequence-specific transcription factor which is part of a developmental regulatory system that provides cells with specific positional identities on the anterior-posterior axis. This chain is Homeobox protein Hox-A4 (hoxa4), found in Morone saxatilis (Striped bass).